Consider the following 965-residue polypeptide: Sarcosine oxidase subunit alpha (965 aa).

A139, D158, E159, R160, T166, V205, A418, L423, and T425 together coordinate NAD(+). Positions 692 and 784 each coordinate (6R)-5,10-methylene-5,6,7,8-tetrahydrofolate.

Belongs to the GcvT family. As to quaternary structure, heterotetramer composed of subunits alpha (SoxA), beta (SoxB), gamma (SoxG) and delta (SoxD). NAD(+) is required as a cofactor.

It localises to the cytoplasm. The catalysed reaction is sarcosine + (6S)-5,6,7,8-tetrahydrofolate + O2 = (6R)-5,10-methylene-5,6,7,8-tetrahydrofolate + glycine + H2O2. It catalyses the reaction sarcosine + O2 + H2O = formaldehyde + glycine + H2O2. With respect to regulation, inhibited by Zn(2+), Cu(2+), Cd(2+), Hg(2+), Ag(+), p-chloromercuribenzoate (p-CMB), iodoacetamide, N-ethylmaleimide, CN(-), o-phenanthroline and sodium lauryl sulfate. In the presence of tetrahydrofolate, catalyzes the oxidative demethylation of sarcosine to yield glycine, 5,10-methylenetetrahydrofolate and hydrogen peroxide. In the absence of tetrahydrofolate, catalyzes the oxidative demethylation of sarcosine to yield glycine, formaldehyde and hydrogen peroxide. Can also use N-methyl-L-alanine and N-ethyl-L-glycine. Is very specific for oxygen as an acceptor. In Corynebacterium sp. (strain U-96), this protein is Sarcosine oxidase subunit alpha.